The following is a 115-amino-acid chain: Protachykinin-1 (115 aa).

The signal sequence occupies residues 1 to 19; the sequence is MKILVALAVLALVSTQLFA. Positions 20-56 are excised as a propeptide; it reads EDIRANDDLNYWSDWSDSDQIKEELPEPFEHLLQRIA. Met-68 and Met-92 each carry methionine amide.

This sequence belongs to the tachykinin family. Post-translationally, the substance P form is cleaved at Pro-59 by the prolyl endopeptidase FAP (seprase) activity (in vitro). Substance P is also cleaved and degraded by Angiotensin-converting enzyme (ACE) and neprilysin (MME).

The protein resides in the secreted. Functionally, tachykinins are active peptides which excite neurons, evoke behavioral responses, are potent vasodilators and secretagogues, and contract (directly or indirectly) many smooth muscles. This is Protachykinin-1 (TAC1) from Oryctolagus cuniculus (Rabbit).